We begin with the raw amino-acid sequence, 77 residues long: Large ribosomal subunit protein uL24 (77 aa).

This sequence belongs to the universal ribosomal protein uL24 family. As to quaternary structure, part of the 50S ribosomal subunit.

In terms of biological role, one of two assembly initiator proteins, it binds directly to the 5'-end of the 23S rRNA, where it nucleates assembly of the 50S subunit. One of the proteins that surrounds the polypeptide exit tunnel on the outside of the subunit. This chain is Large ribosomal subunit protein uL24, found in Campylobacter fetus subsp. fetus (strain 82-40).